Reading from the N-terminus, the 137-residue chain is ATP synthase epsilon chain, chloroplastic (137 aa).

It belongs to the ATPase epsilon chain family. In terms of assembly, F-type ATPases have 2 components, CF(1) - the catalytic core - and CF(0) - the membrane proton channel. CF(1) has five subunits: alpha(3), beta(3), gamma(1), delta(1), epsilon(1). CF(0) has three main subunits: a, b and c.

Its subcellular location is the plastid. The protein localises to the chloroplast thylakoid membrane. Its function is as follows. Produces ATP from ADP in the presence of a proton gradient across the membrane. The protein is ATP synthase epsilon chain, chloroplastic of Hordeum vulgare (Barley).